Here is a 1007-residue protein sequence, read N- to C-terminus: Protein vav-1 (1007 aa).

The 115-residue stretch at 37–151 (CDLWIGCARW…TLSFLSHTKE (115 aa)) folds into the Calponin-homology (CH) domain. An AC region spans residues 151–239 (ESLSRGVDPF…ENDLQNTPTL (89 aa)). Residues 153–176 (LSRGVDPFPDTDNNQEGTSNGSEF) are disordered. Polar residues predominate over residues 163–174 (TDNNQEGTSNGS). Phosphotyrosine occurs at positions 183, 200, and 217. The DH domain maps to 240–437 (KRNRCIRELY…EDVCNYINEE (198 aa)). The region spanning 470 to 598 (RVNLDGEVKM…WMTALLLSKS (129 aa)) is the PH domain. The segment at 610–664 (NHKVAFHSFRVDVKNPATCDVCDKLMKGLQYQGYKCESCNMSMHKECLGLKKCEA) adopts a Phorbol-ester/DAG-type zinc-finger fold. In terms of domain architecture, SH3 1 spans 688–750 (HEGDIVVANS…HLDHVSQSRT (63 aa)). A disordered region spans residues 778–817 (LPNKLLSDGSSRSLSGPHGSRSSRNSSSSTINGSMDSVPR). Residues 782 to 814 (LLSDGSSRSLSGPHGSRSSRNSSSSTINGSMDS) are compositionally biased toward low complexity. The SH2 domain maps to 831–925 (WYMGEMERAK…ALDTCLKNPY (95 aa)). One can recognise an SH3 2 domain in the interval 926–991 (SQCKVFKAVH…PLSYVKPYDP (66 aa)).

In terms of processing, GEF activity is regulated by phosphorylation on tyrosine residues. Strong expression in the pharynx, proximal gonad, spermatheca, intestine and rectal epithelia.

Its function is as follows. Acts as a guanine nucleotide exchange factor (GEF) for Rho GTPase. Has a critical roles in the generation of rhythmic behaviors: feeding, defecation and ovulation by dynamically regulating the concentration of intracellular calcium. Plays a role in male tail tip morphogenesis. The sequence is that of Protein vav-1 from Caenorhabditis elegans.